Consider the following 265-residue polypeptide: ClpXP adapter protein SpxH (265 aa).

The protein belongs to the SpxH family. Interacts with Spx.

Its subcellular location is the cytoplasm. Adapter protein required for efficient degradation of Spx by ClpXP under non-stress conditions. Interaction with Spx stabilizes Spx and exposes the C-terminus of Spx for recognition and proteolysis by ClpXP. The polypeptide is ClpXP adapter protein SpxH (Staphylococcus epidermidis (strain ATCC 35984 / DSM 28319 / BCRC 17069 / CCUG 31568 / BM 3577 / RP62A)).